The sequence spans 413 residues: Coiled-coil domain-containing protein 83 (413 aa).

Residues 1 to 21 form a disordered region; it reads MENSGKANKKDTHDGPPKEIK. Positions 8–21 are enriched in basic and acidic residues; the sequence is NKKDTHDGPPKEIK. Coiled-coil stretches lie at residues 37–184 and 216–256; these read EDAV…RKKI and WEND…LSNC.

This is Coiled-coil domain-containing protein 83 (CCDC83) from Homo sapiens (Human).